Here is a 501-residue protein sequence, read N- to C-terminus: Glycerol kinase (501 aa).

Threonine 12 lines the ADP pocket. Positions 12, 13, and 14 each coordinate ATP. A sn-glycerol 3-phosphate-binding site is contributed by threonine 12. An ADP-binding site is contributed by arginine 16. 4 residues coordinate sn-glycerol 3-phosphate: arginine 82, glutamate 83, tyrosine 134, and aspartate 244. Arginine 82, glutamate 83, tyrosine 134, aspartate 244, and glutamine 245 together coordinate glycerol. The ADP site is built by threonine 266 and glycine 310. The ATP site is built by threonine 266, glycine 310, glutamine 314, and glycine 411. Residues glycine 411 and asparagine 415 each coordinate ADP.

This sequence belongs to the FGGY kinase family.

It carries out the reaction glycerol + ATP = sn-glycerol 3-phosphate + ADP + H(+). It participates in polyol metabolism; glycerol degradation via glycerol kinase pathway; sn-glycerol 3-phosphate from glycerol: step 1/1. With respect to regulation, inhibited by fructose 1,6-bisphosphate (FBP). Its function is as follows. Key enzyme in the regulation of glycerol uptake and metabolism. Catalyzes the phosphorylation of glycerol to yield sn-glycerol 3-phosphate. This Methylorubrum populi (strain ATCC BAA-705 / NCIMB 13946 / BJ001) (Methylobacterium populi) protein is Glycerol kinase.